A 166-amino-acid polypeptide reads, in one-letter code: Ribonuclease H (166 aa).

In terms of domain architecture, RNase H type-1 spans 5 to 147; it reads PRKRVALFTD…VDREARRQAQ (143 aa). Mg(2+) is bound by residues Asp14, Glu52, Asp74, and Asp139. The disordered stretch occupies residues 128-166; it reads GHTGHPENERVDREARRQAQSQAKTPCPPQAPTLFHEEA. The span at 131–144 shows a compositional bias: basic and acidic residues; it reads GHPENERVDREARR.

It belongs to the RNase H family. As to quaternary structure, monomer. The cofactor is Mg(2+).

It is found in the cytoplasm. It catalyses the reaction Endonucleolytic cleavage to 5'-phosphomonoester.. Functionally, endonuclease that specifically degrades the RNA of RNA-DNA hybrids. In Thermus thermophilus (strain ATCC BAA-163 / DSM 7039 / HB27), this protein is Ribonuclease H.